Consider the following 352-residue polypeptide: DNA polymerase IV (352 aa).

In terms of domain architecture, UmuC spans 4–185 (IIHVDMDCFF…LPLSKIPGVG (182 aa)). Residues aspartate 8 and aspartate 103 each contribute to the Mg(2+) site. The active site involves glutamate 104.

This sequence belongs to the DNA polymerase type-Y family. Monomer. The cofactor is Mg(2+).

The protein resides in the cytoplasm. The catalysed reaction is DNA(n) + a 2'-deoxyribonucleoside 5'-triphosphate = DNA(n+1) + diphosphate. Poorly processive, error-prone DNA polymerase involved in untargeted mutagenesis. Copies undamaged DNA at stalled replication forks, which arise in vivo from mismatched or misaligned primer ends. These misaligned primers can be extended by PolIV. Exhibits no 3'-5' exonuclease (proofreading) activity. May be involved in translesional synthesis, in conjunction with the beta clamp from PolIII. The protein is DNA polymerase IV of Enterobacter sp. (strain 638).